The sequence spans 501 residues: Cystine/glutamate transporter (501 aa).

The Cytoplasmic segment spans residues 1-43 (MVRKPVVSTISKGGYLQGNVNGRLPSLGNKEPPGQEKVQLKRK). Residue serine 26 is modified to Phosphoserine. Residues 44-64 (VTLLRGVSIIIGTIIGAGIFI) form a helical membrane-spanning segment. Residues 65–74 (SPKGVLQNTG) are Extracellular-facing. A helical membrane pass occupies residues 75-95 (SVGMSLTIWTVCGVLSLFGAL). Over 96–101 (SYAELG) the chain is Cytoplasmic. Residues 102-116 (TTIKKSGGHYTYILE) lie within the membrane without spanning it. Residues 117-130 (VFGPLPAFVRVWVE) lie on the Cytoplasmic side of the membrane. A helical membrane pass occupies residues 131–150 (LLIIRPAATAVISLAFGRYI). L-glutamate is bound at residue arginine 135. Topologically, residues 151–163 (LEPFFIQCEIPEL) are extracellular. A helical transmembrane segment spans residues 164–179 (AIKLITAVGITVVMVL). Residues 180 to 193 (NSMSVSWSARIQIF) are Cytoplasmic-facing. A helical transmembrane segment spans residues 194–210 (LTFCKLTAILIIIVPGV). Residues 211–234 (MQLIKGQTQNFKDAFSGRDSSITR) are Extracellular-facing. A helical transmembrane segment spans residues 235–255 (LPLAFYYGMYAYAGWFYLNFV). Tyrosine 244 is an L-glutamate binding site. Over 256-265 (TEEVENPEKT) the chain is Cytoplasmic. The helical transmembrane segment at 266 to 286 (IPLAICISMAIVTIGYVLTNV) threads the bilayer. Topologically, residues 287–317 (AYFTTINAEELLLSNAVAVTFSERLLGNFSL) are extracellular. Residue asparagine 314 is glycosylated (N-linked (GlcNAc...) asparagine). The helical transmembrane segment at 318–338 (AVPIFVALSCFGSMNGGVFAV) threads the bilayer. Topologically, residues 339-364 (SRLFYVASREGHLPEILSMIHVRKHT) are cytoplasmic. Residues 365-385 (PLPAVIVLHPLTMIMLFSGDL) form a helical membrane-spanning segment. The Extracellular segment spans residues 386 to 387 (DS). The helical transmembrane segment at 388–408 (LLNFLSFARWLFIGLAVAGLI) threads the bilayer. The Cytoplasmic segment spans residues 409–422 (YLRYKCPDMHRPFK). Residues 423-443 (VPLFIPALFSFTCLFMVALSL) traverse the membrane as a helical segment. Residues 444-449 (YSDPFS) lie on the Extracellular side of the membrane. A helical membrane pass occupies residues 450–470 (TGIGSVITLTGVPAYYLFIIW). Residues 471–501 (DKKPRWFRIMSEKITRTLQIILEVVPEEDKL) lie on the Cytoplasmic side of the membrane.

The protein belongs to the amino acid-polyamine-organocation (APC) superfamily. L-type amino acid transporter (LAT) (TC 2.A.3.8) family. Disulfide-linked heterodimer with the amino acid transport protein SLC3A2/4F2hc; this interaction mediates cell membrane localization.

Its subcellular location is the cell membrane. It localises to the cell projection. It is found in the microvillus membrane. It carries out the reaction L-cystine(out) + L-glutamate(in) = L-cystine(in) + L-glutamate(out). It catalyses the reaction an L-alpha-amino acid(in) + L-kynurenine(out) = an L-alpha-amino acid(out) + L-kynurenine(in). The enzyme catalyses N-acetyl-L-cysteine(out) + L-glutamate(in) = N-acetyl-L-cysteine(in) + L-glutamate(out). Its function is as follows. Heterodimer with SLC3A2, that functions as an antiporter by mediating the exchange of extracellular anionic L-cystine and intracellular L-glutamate across the cellular plasma membrane. Provides L-cystine for the maintenance of the redox balance between extracellular L-cystine and L-cysteine and for the maintenance of the intracellular levels of glutathione that is essential for cells protection from oxidative stress. The transport is sodium-independent, electroneutral with a stoichiometry of 1:1, and is drove by the high intracellular concentration of L-glutamate and the intracellular reduction of L-cystine. In addition, mediates the import of L-kynurenine leading to anti-ferroptotic signaling propagation required to maintain L-cystine and glutathione homeostasis. Moreover, mediates N-acetyl-L-cysteine uptake into the placenta leading to subsequently down-regulation of pathways associated with oxidative stress, inflammation and apoptosis. In vitro can also transport L-aspartate. May participate in astrocyte and meningeal cell proliferation during development and can provide neuroprotection by promoting glutathione synthesis and delivery from non-neuronal cells such as astrocytes and meningeal cells to immature neurons. Controls the production of pheomelanin pigment directly. In Pongo abelii (Sumatran orangutan), this protein is Cystine/glutamate transporter.